A 946-amino-acid chain; its full sequence is Structure-specific endonuclease subunit SLX4 (946 aa).

Over residues 1 to 14 (MPASPLPALSPPAS) the composition is skewed to pro residues. Disordered stretches follow at residues 1-35 (MPASPLPALSPPASPRRNTSGASALGSRKADIPPD), 54-119 (QHFD…EEAV), 147-318 (PSDE…GGFT), 339-399 (ADSA…AAQL), 416-471 (TKVP…PKHI), 577-748 (FPLL…GSGR), and 765-799 (ALSPTPPRIHNFENSQPLPLYSVSPTRAKKPKADS). Basic and acidic residues predominate over residues 54–74 (QHFDDDIAGKDQEQSRKKSPE). 2 stretches are compositionally biased toward basic residues: residues 160 to 169 (KAGKPRKPRA) and 182 to 195 (KPKRTRVTKPKAAK). Positions 278–287 (AVSRRRDWTP) are enriched in basic and acidic residues. The span at 453–469 (SKARSKKASTKAAAKPK) shows a compositional bias: basic residues. Positions 627-636 (KANDEPDHVM) are enriched in basic and acidic residues. Polar residues predominate over residues 707-717 (KSQSAIATSGS). The span at 722–733 (KEPKRTKGKEVK) shows a compositional bias: basic and acidic residues.

This sequence belongs to the SLX4 family. In terms of assembly, forms a heterodimer with SLX1. In terms of processing, phosphorylated in response to DNA damage.

It is found in the nucleus. Regulatory subunit of the SLX1-SLX4 structure-specific endonuclease that resolves DNA secondary structures generated during DNA repair and recombination. Has endonuclease activity towards branched DNA substrates, introducing single-strand cuts in duplex DNA close to junctions with ss-DNA. The sequence is that of Structure-specific endonuclease subunit SLX4 from Phaeosphaeria nodorum (strain SN15 / ATCC MYA-4574 / FGSC 10173) (Glume blotch fungus).